Consider the following 177-residue polypeptide: Adenine phosphoribosyltransferase (177 aa).

This sequence belongs to the purine/pyrimidine phosphoribosyltransferase family. As to quaternary structure, homodimer.

It localises to the cytoplasm. It catalyses the reaction AMP + diphosphate = 5-phospho-alpha-D-ribose 1-diphosphate + adenine. It functions in the pathway purine metabolism; AMP biosynthesis via salvage pathway; AMP from adenine: step 1/1. Functionally, catalyzes a salvage reaction resulting in the formation of AMP, that is energically less costly than de novo synthesis. The protein is Adenine phosphoribosyltransferase of Cutibacterium acnes (strain DSM 16379 / KPA171202) (Propionibacterium acnes).